A 449-amino-acid chain; its full sequence is MRECISVHVGQAGVQIGNACWELFCLEHGIQADGTFGTQASKINDDDSFTTFFSETGNGKHVPRAVMVDLEPTVVDEVRAGTYRQLFHPEQLITGKEDAANNYARGHYTVGKESIDLVLDRIRKLTDACSGLQGFLIFHSFGGGTGSGFTSLLMERLSLDYGKKSKLEFAIYPAPQVSTAVVEPYNSILTTHTTLEHSDCAFMVDNEAIYDICRRNLDIERPTYTNLNRLISQIVSSITASLRFDGALNVDLTEFQTNLVPYPRIHFPLVTYAPIISAEKAYHEQLSVAEITSSCFEPNSQMVKCDPRHGKYMACCMLYRGDVVPKDVNVAIAAIKTKRTIQFVDWCPTGFKVGINYQPPTVVPGGDLAKVQRAVCMLSNTTAIAEAWARLDHKFDLMYAKRAFVHWYVGEGMEEGEFSEAREDLAALEKDYEEVGTDSFEEENEGEEF.

Positions 1 to 4 (MREC) match the MREC motif motif. Gln11, Glu71, Ser140, Gly144, Thr145, Thr179, Asn206, and Asn228 together coordinate GTP. Glu71 is a binding site for Mg(2+). Residue Glu254 is part of the active site.

This sequence belongs to the tubulin family. As to quaternary structure, dimer of alpha and beta chains. A typical microtubule is a hollow water-filled tube with an outer diameter of 25 nm and an inner diameter of 15 nM. Alpha-beta heterodimers associate head-to-tail to form protofilaments running lengthwise along the microtubule wall with the beta-tubulin subunit facing the microtubule plus end conferring a structural polarity. Microtubules usually have 13 protofilaments but different protofilament numbers can be found in some organisms and specialized cells. Mg(2+) serves as cofactor. In terms of processing, some glutamate residues at the C-terminus are polyglycylated, resulting in polyglycine chains on the gamma-carboxyl group. Glycylation is mainly limited to tubulin incorporated into axonemes (cilia and flagella) whereas glutamylation is prevalent in neuronal cells, centrioles, axonemes, and the mitotic spindle. Both modifications can coexist on the same protein on adjacent residues, and lowering polyglycylation levels increases polyglutamylation, and reciprocally. Cilia and flagella glycylation is required for their stability and maintenance. Flagella glycylation controls sperm motility. Some glutamate residues at the C-terminus are polyglutamylated, resulting in polyglutamate chains on the gamma-carboxyl group. Polyglutamylation plays a key role in microtubule severing by spastin (SPAST). SPAST preferentially recognizes and acts on microtubules decorated with short polyglutamate tails: severing activity by SPAST increases as the number of glutamates per tubulin rises from one to eight, but decreases beyond this glutamylation threshold. Glutamylation is also involved in cilia motility. Post-translationally, the C-terminal phenylalanine residue is cleaved by MATCAP1/KIAA0895L. As to expression, expressed at highest levels in the testis, followed by skeletal and heart muscle. Expressed at low levels in the developing brain.

It is found in the cytoplasm. It localises to the cytoskeleton. The enzyme catalyses GTP + H2O = GDP + phosphate + H(+). Tubulin is the major constituent of microtubules, a cylinder consisting of laterally associated linear protofilaments composed of alpha- and beta-tubulin heterodimers. Microtubules grow by the addition of GTP-tubulin dimers to the microtubule end, where a stabilizing cap forms. Below the cap, tubulin dimers are in GDP-bound state, owing to GTPase activity of alpha-tubulin. This is Tubulin alpha-8 chain (Tuba8) from Mus musculus (Mouse).